A 76-amino-acid chain; its full sequence is SCIDFGGDCDGEKDDCQCCRSNGYCSCYNLFGYLKSGCKCEVGTSAEFRRICRRKAKQCYNSDPDKCVSVYKPKRR.

Disulfide bonds link cysteine 2-cysteine 19, cysteine 9-cysteine 25, cysteine 16-cysteine 52, cysteine 18-cysteine 40, cysteine 27-cysteine 38, and cysteine 59-cysteine 67.

It belongs to the neurotoxin 04 (omega-agtx) family. 03 (type II/III omega-agtx) subfamily. In terms of tissue distribution, expressed by the venom gland.

It localises to the secreted. Functionally, omega-agatoxins are antagonists of voltage-gated calcium channels. This toxin blocks calcium channels in insect central neurons but not at peripheral neuromuscular junctions. In vertebrates, it is broadly active against all high-threshold Cav1/CACNA1 channels and Cav2.2/CACNA1B channels. This Agelenopsis aperta (North American funnel-web spider) protein is Omega-agatoxin-Aa3b.